We begin with the raw amino-acid sequence, 1057 residues long: mRNA export factor elf1 (1057 aa).

2 ABC transporter domains span residues 440–659 and 692–1019; these read IEEE…VKPE and LKMT…KKKL. ATP is bound by residues 477-484 and 726-733; these read GHNGCGKS and GPNGAGKS. Position 733 is a phosphoserine (Ser-733). The 50-residue stretch at 820 to 869 folds into the Chromo domain; sequence RRVEALIGRQKLKKSFQYEIKWFGKPHKYNTWVSREILLENGFQKFVQAF. Residues 1020 to 1036 show a composition bias toward basic and acidic residues; that stretch reads TRNEIKAKERRAREREL. The tract at residues 1020 to 1057 is disordered; that stretch reads TRNEIKAKERRARERELAWLQSPKGTEKPKSFFSDDEE. 2 positions are modified to phosphoserine: Ser-1041 and Ser-1053.

Belongs to the ABC transporter superfamily. ABCF family. EF3 subfamily.

It localises to the cytoplasm. Its subcellular location is the nucleus. Functionally, has a direct role in the mRNA export process. Appears to act within the rae1 mediated mRNA export pathway. In Schizosaccharomyces pombe (strain 972 / ATCC 24843) (Fission yeast), this protein is mRNA export factor elf1 (elf1).